Consider the following 287-residue polypeptide: Eukaryotic translation initiation factor 3 subunit F (287 aa).

The MPN domain occupies V12 to G142.

The protein belongs to the eIF-3 subunit F family. In terms of assembly, component of the eukaryotic translation initiation factor 3 (eIF-3) complex.

It is found in the cytoplasm. Functionally, component of the eukaryotic translation initiation factor 3 (eIF-3) complex, which is involved in protein synthesis of a specialized repertoire of mRNAs and, together with other initiation factors, stimulates binding of mRNA and methionyl-tRNAi to the 40S ribosome. The eIF-3 complex specifically targets and initiates translation of a subset of mRNAs involved in cell proliferation. This Aedes aegypti (Yellowfever mosquito) protein is Eukaryotic translation initiation factor 3 subunit F.